The primary structure comprises 220 residues: Deoxyribose-phosphate aldolase (220 aa).

Asp-89 functions as the Proton donor/acceptor in the catalytic mechanism. The active-site Schiff-base intermediate with acetaldehyde is the Lys-151. Lys-180 (proton donor/acceptor) is an active-site residue.

It belongs to the DeoC/FbaB aldolase family. DeoC type 1 subfamily.

Its subcellular location is the cytoplasm. It catalyses the reaction 2-deoxy-D-ribose 5-phosphate = D-glyceraldehyde 3-phosphate + acetaldehyde. It participates in carbohydrate degradation; 2-deoxy-D-ribose 1-phosphate degradation; D-glyceraldehyde 3-phosphate and acetaldehyde from 2-deoxy-alpha-D-ribose 1-phosphate: step 2/2. Functionally, catalyzes a reversible aldol reaction between acetaldehyde and D-glyceraldehyde 3-phosphate to generate 2-deoxy-D-ribose 5-phosphate. In Streptococcus pneumoniae serotype 4 (strain ATCC BAA-334 / TIGR4), this protein is Deoxyribose-phosphate aldolase.